The following is a 577-amino-acid chain: Putative pseudouridine synthase B0024.11 (577 aa).

The Nucleophile role is filled by aspartate 188. The 208-residue stretch at 265-472 (GFINYFGTQR…GESSRCLFVE (208 aa)) folds into the TRUD domain. Basic and acidic residues predominate over residues 538 to 565 (KAMRDASFKTRGDDEKTEENVLEEKGSD). The interval 538–577 (KAMRDASFKTRGDDEKTEENVLEEKGSDDANELNLVSEDQ) is disordered.

This sequence belongs to the pseudouridine synthase TruD family.

It catalyses the reaction a uridine in tRNA = a pseudouridine in tRNA. The polypeptide is Putative pseudouridine synthase B0024.11 (Caenorhabditis elegans).